Reading from the N-terminus, the 112-residue chain is MDLRSALEKTNIIKSYKLHFLIRYTTSRFEVKEPFLAYLHMARQKDKLLPKCITPPNKKADPFTNDVSSYFTHTHTHTPCSPSLVYTYVNTTEKSPSKSPKHKNILPFNFTK.

The interval 93 to 112 (EKSPSKSPKHKNILPFNFTK) is disordered.

Belongs to the UPF0320 family.

This chain is Putative UPF0320 protein YEL074W, found in Saccharomyces cerevisiae (strain ATCC 204508 / S288c) (Baker's yeast).